A 101-amino-acid chain; its full sequence is Peroxisomal biogenesis factor 39 (101 aa).

It localises to the peroxisome. Its function is as follows. May be a peroxin involved in the PTS2-mediated protein import pathway. The polypeptide is Peroxisomal biogenesis factor 39 (Homo sapiens (Human)).